The sequence spans 731 residues: Actin filament-associated protein 1 (731 aa).

M1 carries the post-translational modification N-acetylmethionine. The interval 56-90 (NNLPAPPQMPLPEIPQPWLPPDSGPPPLPTSSLPE) is disordered. The segment covering 59–84 (PAPPQMPLPEIPQPWLPPDSGPPPLP) has biased composition (pro residues). An SH3-binding motif is present at residues 70-73 (PQPW). The short motif at 93–96 (YEEA) is the SH2-binding 1 element. The segment at 118-139 (SSSYESYDEEEEDGKGKKTRHQ) is disordered. A PH 1 domain is found at 152–248 (DAKICAFLLR…WLKVIKEAYS (97 aa)). The disordered stretch occupies residues 252 to 318 (GPVDPECSPP…SKSEAKGTVS (67 aa)). Residues 271-284 (AELEKKLSSERPSS) are compositionally biased toward basic and acidic residues. Phosphoserine occurs at positions 283 and 284. In terms of domain architecture, PH 2 spans 348 to 442 (DVPTCGYLNV…WIGILLAETG (95 aa)). The SH2-binding 2 motif lies at 452 to 457 (YDYIDV). The tract at residues 513-544 (KNKKPPASSNGVPVKGKAPSSQQKKVETAGGV) is disordered. At S549 the chain carries Phosphoserine. A coiled-coil region spans residues 558-649 (KNRVEADAKR…VKESLKKALA (92 aa)). An interaction with F-actin region spans residues 595–638 (DLRAAIEVNAGRKTQAALEDKLKRLEEECKQREAERVSLELELT). The segment at 658-731 (IEPRSGTSSP…AKEWELKNGT (74 aa)) is disordered. Phosphoserine is present on residues S665, S666, and S669. T676 is subject to Phosphothreonine. Positions 678-687 (ENSPISSCDT) are enriched in polar residues. Residues S680 and S688 each carry the phosphoserine modification. A compositionally biased stretch (basic and acidic residues) spans 721–731 (KAKEWELKNGT).

Monomer and homomultimer. Interacts via its C-terminus with F-actin; probably involving AFAP1 multimers. Interacts with activated SRC SH3-SH2 domains. Interacts via its PH 1 domain with PRKCA, PRKCB and PRKCI. Phosphorylated on tyrosine residues by SRC.

It is found in the cytoplasm. The protein localises to the cytoskeleton. Its subcellular location is the stress fiber. Its function is as follows. Can cross-link actin filaments into both network and bundle structures. May modulate changes in actin filament integrity and induce lamellipodia formation. May function as an adapter molecule that links other proteins, such as SRC and PKC to the actin cytoskeleton. The sequence is that of Actin filament-associated protein 1 (Afap1) from Mus musculus (Mouse).